A 131-amino-acid polypeptide reads, in one-letter code: Glycine cleavage system H protein (131 aa).

The 83-residue stretch at 24–106 folds into the Lipoyl-binding domain; that stretch reads TVRVGITDYA…YGEGWLVDLR (83 aa). The residue at position 65 (Lys65) is an N6-lipoyllysine.

Belongs to the GcvH family. The glycine cleavage system is composed of four proteins: P, T, L and H. It depends on (R)-lipoate as a cofactor.

The glycine cleavage system catalyzes the degradation of glycine. The H protein shuttles the methylamine group of glycine from the P protein to the T protein. In Mycolicibacterium smegmatis (strain ATCC 700084 / mc(2)155) (Mycobacterium smegmatis), this protein is Glycine cleavage system H protein.